The following is a 533-amino-acid chain: uncharacterized protein (533 aa).

Composition is skewed to polar residues over residues Ser-30–His-43, Asn-79–Ser-91, Asn-231–Ala-247, and Gly-254–Asn-263. Disordered stretches follow at residues Ser-30–Ala-92 and Ser-221–Ser-274. A Phosphoserine modification is found at Ser-336. Positions His-475–Val-510 are disordered. Residues Pro-476 to Pro-490 show a composition bias toward low complexity. Over residues Pro-498 to Val-510 the composition is skewed to basic and acidic residues.

It localises to the nucleus. This is an uncharacterized protein from Schizosaccharomyces pombe (strain 972 / ATCC 24843) (Fission yeast).